Here is a 96-residue protein sequence, read N- to C-terminus: Large ribosomal subunit protein uL23 (96 aa).

This sequence belongs to the universal ribosomal protein uL23 family. As to quaternary structure, part of the 50S ribosomal subunit. Contacts protein L29, and trigger factor when it is bound to the ribosome.

In terms of biological role, one of the early assembly proteins it binds 23S rRNA. One of the proteins that surrounds the polypeptide exit tunnel on the outside of the ribosome. Forms the main docking site for trigger factor binding to the ribosome. This is Large ribosomal subunit protein uL23 from Ruthia magnifica subsp. Calyptogena magnifica.